The sequence spans 545 residues: Probable zinc metalloprotease EGY2, chloroplastic (545 aa).

Residues 1–63 constitute a chloroplast transit peptide; it reads MQLPAMSCSP…QIRNRRFVCQ (63 aa). The interval 66–142 is disordered; the sequence is TETEPDGDGN…DATPASDAQE (77 aa). Over residues 68–85 the composition is skewed to acidic residues; sequence TEPDGDGNGDEEKEELGD. 2 stretches are compositionally biased toward polar residues: residues 88-109 and 117-129; these read SSPSVYSVTQENGSAESETNAD and NTEPLSSSDTVQN. 7 helical membrane-spanning segments follow: residues 256–276, 300–320, 325–345, 363–383, 426–446, 473–493, and 513–533; these read AVPEWFAAASFGVVTIFTLLL, VYGALVTAAIIGVHEIAHILA, GIKLAVPYFVPSWQIGSFGAI, AAGPLAGFSLGFVLLLLGFIL, PLVLWAWAGLLINAINSIPAG, LLGISALFNDVAFYWVVLIFF, and YISIGVAILLFGLLVCLPYPF.

The protein belongs to the peptidase M50B family.

The protein localises to the plastid. Its subcellular location is the chloroplast membrane. Probable membrane-associated metalloprotease that may be involved in chloroplast development. This is Probable zinc metalloprotease EGY2, chloroplastic (EGY2) from Oryza sativa subsp. indica (Rice).